The primary structure comprises 510 residues: Light-independent protochlorophyllide reductase subunit B (510 aa).

Asp36 is a [4Fe-4S] cluster binding site. Asp296 (proton donor) is an active-site residue. Residue 431–432 (GM) participates in substrate binding.

The protein belongs to the ChlB/BchB/BchZ family. As to quaternary structure, protochlorophyllide reductase is composed of three subunits; ChlL, ChlN and ChlB. Forms a heterotetramer of two ChlB and two ChlN subunits. [4Fe-4S] cluster serves as cofactor.

It carries out the reaction chlorophyllide a + oxidized 2[4Fe-4S]-[ferredoxin] + 2 ADP + 2 phosphate = protochlorophyllide a + reduced 2[4Fe-4S]-[ferredoxin] + 2 ATP + 2 H2O. It participates in porphyrin-containing compound metabolism; chlorophyll biosynthesis (light-independent). Component of the dark-operative protochlorophyllide reductase (DPOR) that uses Mg-ATP and reduced ferredoxin to reduce ring D of protochlorophyllide (Pchlide) to form chlorophyllide a (Chlide). This reaction is light-independent. The NB-protein (ChlN-ChlB) is the catalytic component of the complex. The polypeptide is Light-independent protochlorophyllide reductase subunit B (Synechococcus sp. (strain JA-2-3B'a(2-13)) (Cyanobacteria bacterium Yellowstone B-Prime)).